Here is a 329-residue protein sequence, read N- to C-terminus: DNA-directed RNA polymerase subunit alpha (329 aa).

Residues 1–235 (MQGSVTEFLK…EQLEAFVDLR (235 aa)) form an alpha N-terminal domain (alpha-NTD) region. The tract at residues 249–329 (FDPILLRPVD…DWPPASIADE (81 aa)) is alpha C-terminal domain (alpha-CTD).

Belongs to the RNA polymerase alpha chain family. As to quaternary structure, homodimer. The RNAP catalytic core consists of 2 alpha, 1 beta, 1 beta' and 1 omega subunit. When a sigma factor is associated with the core the holoenzyme is formed, which can initiate transcription.

The enzyme catalyses RNA(n) + a ribonucleoside 5'-triphosphate = RNA(n+1) + diphosphate. Functionally, DNA-dependent RNA polymerase catalyzes the transcription of DNA into RNA using the four ribonucleoside triphosphates as substrates. The polypeptide is DNA-directed RNA polymerase subunit alpha (Salmonella choleraesuis (strain SC-B67)).